The following is a 358-amino-acid chain: Aromatic amino acid aminotransferase (358 aa).

Position 214 is an N6-(pyridoxal phosphate)lysine (lysine 214).

It belongs to the class-II pyridoxal-phosphate-dependent aminotransferase family. As to quaternary structure, homodimer. The cofactor is pyridoxal 5'-phosphate.

The enzyme catalyses an aromatic L-alpha-amino acid + 2-oxoglutarate = an aromatic oxo-acid + L-glutamate. Its function is as follows. Aminotransferase that catalyzes the conversion of aromatic amino acids and 2-oxoglutarate into corresponding aromatic oxo acids and L-glutamate. This chain is Aromatic amino acid aminotransferase, found in Rhodococcus erythropolis (strain PR4 / NBRC 100887).